Consider the following 498-residue polypeptide: ATP synthase subunit beta, chloroplastic (498 aa).

172–179 is an ATP binding site; that stretch reads GGAGVGKT.

Belongs to the ATPase alpha/beta chains family. F-type ATPases have 2 components, CF(1) - the catalytic core - and CF(0) - the membrane proton channel. CF(1) has five subunits: alpha(3), beta(3), gamma(1), delta(1), epsilon(1). CF(0) has four main subunits: a(1), b(1), b'(1) and c(9-12).

Its subcellular location is the plastid. It is found in the chloroplast thylakoid membrane. The catalysed reaction is ATP + H2O + 4 H(+)(in) = ADP + phosphate + 5 H(+)(out). In terms of biological role, produces ATP from ADP in the presence of a proton gradient across the membrane. The catalytic sites are hosted primarily by the beta subunits. The sequence is that of ATP synthase subunit beta, chloroplastic from Jasminum nudiflorum (Winter jasmine).